Reading from the N-terminus, the 458-residue chain is ATP synthase subunit beta (458 aa).

ATP is bound at residue 148–155 (GGAGVGKT).

Belongs to the ATPase alpha/beta chains family. F-type ATPases have 2 components, CF(1) - the catalytic core - and CF(0) - the membrane proton channel. CF(1) has five subunits: alpha(3), beta(3), gamma(1), delta(1), epsilon(1). CF(0) has three main subunits: a(1), b(2) and c(9-12). The alpha and beta chains form an alternating ring which encloses part of the gamma chain. CF(1) is attached to CF(0) by a central stalk formed by the gamma and epsilon chains, while a peripheral stalk is formed by the delta and b chains.

It localises to the cell inner membrane. It catalyses the reaction ATP + H2O + 4 H(+)(in) = ADP + phosphate + 5 H(+)(out). Functionally, produces ATP from ADP in the presence of a proton gradient across the membrane. The catalytic sites are hosted primarily by the beta subunits. The polypeptide is ATP synthase subunit beta (Pseudomonas aeruginosa (strain LESB58)).